Consider the following 132-residue polypeptide: UPF0212 protein PYRAB08340 (132 aa).

It belongs to the UPF0212 family.

This is UPF0212 protein PYRAB08340 from Pyrococcus abyssi (strain GE5 / Orsay).